The sequence spans 103 residues: ATP-dependent Clp protease adapter protein ClpS (103 aa).

The protein belongs to the ClpS family. As to quaternary structure, binds to the N-terminal domain of the chaperone ClpA.

In terms of biological role, involved in the modulation of the specificity of the ClpAP-mediated ATP-dependent protein degradation. This Neisseria meningitidis serogroup A / serotype 4A (strain DSM 15465 / Z2491) protein is ATP-dependent Clp protease adapter protein ClpS.